The following is a 207-amino-acid chain: Large ribosomal subunit protein uL4 (207 aa).

It belongs to the universal ribosomal protein uL4 family. As to quaternary structure, part of the 50S ribosomal subunit.

In terms of biological role, one of the primary rRNA binding proteins, this protein initially binds near the 5'-end of the 23S rRNA. It is important during the early stages of 50S assembly. It makes multiple contacts with different domains of the 23S rRNA in the assembled 50S subunit and ribosome. Forms part of the polypeptide exit tunnel. This chain is Large ribosomal subunit protein uL4, found in Pelagibacter ubique (strain HTCC1062).